The sequence spans 122 residues: Large ribosomal subunit protein uL14 (122 aa).

Belongs to the universal ribosomal protein uL14 family. Part of the 50S ribosomal subunit. Forms a cluster with proteins L3 and L19. In the 70S ribosome, L14 and L19 interact and together make contacts with the 16S rRNA in bridges B5 and B8.

In terms of biological role, binds to 23S rRNA. Forms part of two intersubunit bridges in the 70S ribosome. In Kocuria rhizophila (strain ATCC 9341 / DSM 348 / NBRC 103217 / DC2201), this protein is Large ribosomal subunit protein uL14.